Here is a 268-residue protein sequence, read N- to C-terminus: 4-hydroxy-tetrahydrodipicolinate reductase (268 aa).

NAD(+) contacts are provided by residues G10 to M15, D36, G99 to T101, and A123 to M126. The active-site Proton donor/acceptor is H156. H157 is a binding site for (S)-2,3,4,5-tetrahydrodipicolinate. K160 serves as the catalytic Proton donor. A (S)-2,3,4,5-tetrahydrodipicolinate-binding site is contributed by G166–T167.

This sequence belongs to the DapB family.

It is found in the cytoplasm. The catalysed reaction is (S)-2,3,4,5-tetrahydrodipicolinate + NAD(+) + H2O = (2S,4S)-4-hydroxy-2,3,4,5-tetrahydrodipicolinate + NADH + H(+). It catalyses the reaction (S)-2,3,4,5-tetrahydrodipicolinate + NADP(+) + H2O = (2S,4S)-4-hydroxy-2,3,4,5-tetrahydrodipicolinate + NADPH + H(+). The protein operates within amino-acid biosynthesis; L-lysine biosynthesis via DAP pathway; (S)-tetrahydrodipicolinate from L-aspartate: step 4/4. Catalyzes the conversion of 4-hydroxy-tetrahydrodipicolinate (HTPA) to tetrahydrodipicolinate. The polypeptide is 4-hydroxy-tetrahydrodipicolinate reductase (Herminiimonas arsenicoxydans).